A 707-amino-acid chain; its full sequence is 65-kDa microtubule-associated protein 3 (707 aa).

5 coiled-coil regions span residues 49-84 (LEVY…CSAM), 157-179 (NLSM…EKID), 269-289 (QQEY…ITEA), 354-374 (IVDA…IKEE), and 464-486 (LEEY…DQKK). Residues 495–574 (QEALYGSKPS…PSRKQSMNPS (80 aa)) form a disordered region. Low complexity predominate over residues 500-512 (GSKPSPSKPLGGK). A phosphoserine mark is found at S504 and S528.

Belongs to the MAP65/ASE1 family. Forms a dimer. Binds to microtubules (MT) during cell division. Bundles polymerized MT via the formation of 25-nm crossbridges with centrally located endocytic MT, and midline phragmoplast MT. In terms of tissue distribution, expressed in all tissues enriched in dividing cells, such as the root and shoot apical meristem, foliar primordia, and young leaves, and embryos.

It is found in the nucleus. Its subcellular location is the cytoplasm. It localises to the cytoskeleton. The protein localises to the phragmoplast. Functionally, microtubule-associated protein that plays a critical role in organizing the mitotic microtubule array during both early and late mitosis in all plant organs. Essential for the cytokinesis, especially in roots, by maintaining the integrity of the overlapped microtubules in the phragmoplast. Required during root morphogenesis. Needed for giant cell development during root knot nematode infection, where cytokinesis is initiated but not completed. In Arabidopsis thaliana (Mouse-ear cress), this protein is 65-kDa microtubule-associated protein 3 (MAP65-3).